The chain runs to 128 residues: Sulfurtransferase TusD (128 aa).

The Cysteine persulfide intermediate role is filled by cysteine 78.

The protein belongs to the DsrE/TusD family. Heterohexamer, formed by a dimer of trimers. The hexameric TusBCD complex contains 2 copies each of TusB, TusC and TusD. The TusBCD complex interacts with TusE.

Its subcellular location is the cytoplasm. Its function is as follows. Part of a sulfur-relay system required for 2-thiolation of 5-methylaminomethyl-2-thiouridine (mnm(5)s(2)U) at tRNA wobble positions. Accepts sulfur from TusA and transfers it in turn to TusE. The protein is Sulfurtransferase TusD of Salmonella typhi.